A 530-amino-acid polypeptide reads, in one-letter code: MTEVVAVPVRLRPSATAGVRLPELVAQVGAVLADGPGQAATVPDIPVTGVTLRAQEVLSGDLFAALAGASTHGARYAGVALERGAVAVLTDVAGVAELTAQASSVPILIHPEPRSVLGGLAAAAYGHPSNRMTVVGITGTSGKTTTTYMVEAGLRAGGRVVGLVGTIGIRIDGADIPSFLTTPEAPALQAMLAAMVERGVETVVMEVSSHALSLGRVEGTQFAVAGFTNLSRDHLDFHPDMEEYFEAKAVLFDPHSLLRARTVVVCIDDDAGRATAARAGDAITVSALGQPASWRATDIRSPGVGAQEFTAVDPAGVQHRVGIRLPGRYNVANCLVALAILDVVGVSPEQASLGFRDIRIPGRLERIDCGQDFLALVDYAHKPGALHSVLTALLQPDHRLAVVFGAGGERDPGKRAPMGEIAAELADLVVVTDDNPRGEDPAAIRRDILTGTVAAGGAAQVVEIGDRRAAIQYAVAWAGPDDVVLVAGKGHETGQRGAAETCPFDDRVELARALQVRDARLLPAPGRACQ.

Leu-52 contacts UDP-N-acetyl-alpha-D-muramoyl-L-alanyl-D-glutamate. 139–145 (GTSGKTT) is a binding site for ATP. Residues 181–182 (TT), Ser-208, and Arg-216 contribute to the UDP-N-acetyl-alpha-D-muramoyl-L-alanyl-D-glutamate site. Lys-248 is subject to N6-carboxylysine. Residues Arg-410, 434 to 437 (DNPR), Gly-488, and Glu-492 contribute to the meso-2,6-diaminopimelate site. Positions 434–437 (DNPR) match the Meso-diaminopimelate recognition motif motif.

It belongs to the MurCDEF family. MurE subfamily. Mg(2+) is required as a cofactor. In terms of processing, carboxylation is probably crucial for Mg(2+) binding and, consequently, for the gamma-phosphate positioning of ATP.

It is found in the cytoplasm. It catalyses the reaction UDP-N-acetyl-alpha-D-muramoyl-L-alanyl-D-glutamate + meso-2,6-diaminopimelate + ATP = UDP-N-acetyl-alpha-D-muramoyl-L-alanyl-gamma-D-glutamyl-meso-2,6-diaminopimelate + ADP + phosphate + H(+). The protein operates within cell wall biogenesis; peptidoglycan biosynthesis. Catalyzes the addition of meso-diaminopimelic acid to the nucleotide precursor UDP-N-acetylmuramoyl-L-alanyl-D-glutamate (UMAG) in the biosynthesis of bacterial cell-wall peptidoglycan. The sequence is that of UDP-N-acetylmuramoyl-L-alanyl-D-glutamate--2,6-diaminopimelate ligase from Mycobacterium leprae (strain TN).